Here is a 1195-residue protein sequence, read N- to C-terminus: EST/SMG-like protein 2 (1195 aa).

3 stretches are compositionally biased toward polar residues: residues 1–10, 18–35, and 55–68; these read MPETSVQNPL, TRSMFLSASQQQRPSATP, and VLNPSSKRQNSNSV. 4 disordered regions span residues 1–38, 55–130, 179–268, and 610–643; these read MPETSVQNPLRLSENENTRSMFLSASQQQRPSATPSFP, VLNP…VGIT, SKSE…PASN, and DKKERKKSSNNDSSVTESSTGNSRNDNEDDDEIM. Basic and acidic residues-rich tracts occupy residues 83 to 109 and 197 to 208; these read RFSDIEGKNNDHTYPERTTVKESEKNP and INDKDNSARDQD. Low complexity-rich tracts occupy residues 210-252 and 619-629; these read NNSG…NNSD and NNDSSVTESST. A PINc domain is found at 1025 to 1164; sequence TYFVFDATSW…LISDDDAMKK (140 aa).

In terms of assembly, transiently interacts with PEX14.

It localises to the cytoplasm. The protein localises to the nucleus. The protein resides in the peroxisome. May be involved in the regulation of gene expression responses of environment-sensing pathways. This Saccharomyces cerevisiae (strain ATCC 204508 / S288c) (Baker's yeast) protein is EST/SMG-like protein 2.